A 313-amino-acid polypeptide reads, in one-letter code: MTKAGMTKAGEPRRILFVTGMSGSGKKTALTALEDMGWETVDNLPVSLLERLLAASPAEGSIDEGRPLALGIDSRTRDFDSRGVVRRVRSLRDGGRDASILFFDCSNTELSRRYSETRARHPLARDRQVEDGISYERELLAPLREAADELIDTTDSSTNELQALLRRRFGDSAGTGTTLTVMSFAFSRGVPRDADLMFDMRFLRNPHWVPELKPHSGLDPDVGAYIAGDPIYPEARARIEELILLLLPRYETEGKSYVTIAIGCTGGKHRSVHFAETLASRLRQEGFSPTVRHRDLTRQKSNAEESTVPGVGS.

ATP is bound at residue 20–27 (GMSGSGKK). 73-76 (DSRT) serves as a coordination point for GTP. Residues 289–313 (PTVRHRDLTRQKSNAEESTVPGVGS) are disordered. The segment covering 292–303 (RHRDLTRQKSNA) has biased composition (basic and acidic residues).

This sequence belongs to the RapZ-like family.

In terms of biological role, displays ATPase and GTPase activities. The protein is Nucleotide-binding protein Swit_0399 of Rhizorhabdus wittichii (strain DSM 6014 / CCUG 31198 / JCM 15750 / NBRC 105917 / EY 4224 / RW1) (Sphingomonas wittichii).